The following is a 625-amino-acid chain: pH-response transcription factor pacC/RIM101 (625 aa).

The span at 1-34 (MSSQDQQQQQQPAQTQTSTSSSSNNENATTATSS) shows a compositional bias: low complexity. A disordered region spans residues 1-35 (MSSQDQQQQQQPAQTQTSTSSSSNNENATTATSSI). 3 C2H2-type zinc fingers span residues 45 to 70 (LLCQWEKCSERCPTPEALFDHICEKH), 81 to 105 (LTCGWNSCRTTTVKRDHITSHIRVH), and 111 to 133 (HKCEFCGKAFKRPQDLKKHVKTH). The span at 391-416 (APMTATHSSHSVSSGTPALTPPSSSV) shows a compositional bias: polar residues. Residues 391-440 (APMTATHSSHSVSSGTPALTPPSSSVSYTSGNSPMSSSGMSPISRHSSTS) are disordered. Over residues 417 to 438 (SYTSGNSPMSSSGMSPISRHSS) the composition is skewed to low complexity. Residues 444-447 (YPNL) carry the YPX[LI] motif 1 motif. Disordered regions lie at residues 455-543 (SPHH…SPSV) and 584-625 (VKDE…DDDE). 2 stretches are compositionally biased toward polar residues: residues 461 to 472 (TAPTSTLGTNFD) and 490 to 514 (GLNSSQYRESMETSTVGSPTPSPKE). The YPX[LI] motif 2 signature appears at 615-618 (YPVL).

It belongs to the pacC/RIM101 family. Post-translationally, activated by C-terminal proteolytic cleavage by signaling protease (probably palB/RIM13) at neutral to alkaline ambient pH.

It is found in the cytoplasm. Its subcellular location is the nucleus. Its function is as follows. Transcription factor that mediates regulation of both acid- and alkaline-expressed genes in response to ambient pH. At alkaline ambient pH, activates transcription of alkaline-expressed genes (including pac1 itself) and represses transcription of acid-expressed genes. The polypeptide is pH-response transcription factor pacC/RIM101 (pac1) (Sclerotinia sclerotiorum (White mold)).